The chain runs to 1955 residues: 227 kDa spindle- and centromere-associated protein (1955 aa).

4 coiled-coil regions span residues 82–129 (KKRI…NDDV), 152–317 (EWAS…ELES), 385–1747 (VRNI…LIAL), and 1770–1813 (ERIV…ERFI). Disordered stretches follow at residues 1865–1896 (PTEQ…SYTY) and 1912–1955 (MTSS…TFSE). Over residues 1878-1896 (RTSSTIKSSEGTTRESYTY) the composition is skewed to polar residues. Basic residues predominate over residues 1938–1948 (RKSRPATRKQQ).

The protein localises to the cytoplasm. It localises to the cytoskeleton. Its subcellular location is the microtubule organizing center. The protein resides in the centrosome. It is found in the chromosome. The protein localises to the centromere. It localises to the kinetochore. Its subcellular location is the spindle. In terms of biological role, may play a role in the organization of the spindle apparatus and its interaction with the centromeres. In Parascaris univalens (Nematode worm), this protein is 227 kDa spindle- and centromere-associated protein (PUMA1).